The chain runs to 311 residues: Iron-binding protein YfeA (311 aa).

A signal peptide spans 1 to 31 (MIERLNSPFLRAAALFTIVAFSSLISTAALA). 4 residues coordinate Fe(2+): histidine 76, histidine 141, glutamate 207, and aspartate 282.

The protein belongs to the bacterial solute-binding protein 9 family. Monomer.

It localises to the periplasm. Functionally, part of the ATP-binding cassette (ABC) transport system YfeABC involved in iron import. Binds iron with high affinity and specificity and delivers it to the membrane permease for translocation into the cytoplasm. Also binds Mn(2+) and Zn(2+). The protein is Iron-binding protein YfeA (yfeA) of Yersinia pestis.